A 287-amino-acid chain; its full sequence is 4-hydroxybenzoate octaprenyltransferase (287 aa).

6 consecutive transmembrane segments (helical) span residues 41-61, 89-109, 133-153, 158-178, 218-238, and 267-287; these read WPLI…GCAM, WEAV…ILPL, FFAI…PMAF, NTVP…SIAY, LGIY…WVGW, and NNWL…MAGS.

It belongs to the UbiA prenyltransferase family. It depends on Mg(2+) as a cofactor.

Its subcellular location is the cell inner membrane. The catalysed reaction is all-trans-octaprenyl diphosphate + 4-hydroxybenzoate = 4-hydroxy-3-(all-trans-octaprenyl)benzoate + diphosphate. It participates in cofactor biosynthesis; ubiquinone biosynthesis. Functionally, catalyzes the prenylation of para-hydroxybenzoate (PHB) with an all-trans polyprenyl group. Mediates the second step in the final reaction sequence of ubiquinone-8 (UQ-8) biosynthesis, which is the condensation of the polyisoprenoid side chain with PHB, generating the first membrane-bound Q intermediate 3-octaprenyl-4-hydroxybenzoate. This chain is 4-hydroxybenzoate octaprenyltransferase, found in Burkholderia multivorans (strain ATCC 17616 / 249).